The chain runs to 128 residues: Aspartate 1-decarboxylase (128 aa).

The active-site Schiff-base intermediate with substrate; via pyruvic acid is S25. S25 bears the Pyruvic acid (Ser) mark. Substrate is bound at residue T57. Y58 acts as the Proton donor in catalysis. A substrate-binding site is contributed by 73–75 (GAA).

It belongs to the PanD family. Heterooctamer of four alpha and four beta subunits. It depends on pyruvate as a cofactor. Post-translationally, is synthesized initially as an inactive proenzyme, which is activated by self-cleavage at a specific serine bond to produce a beta-subunit with a hydroxyl group at its C-terminus and an alpha-subunit with a pyruvoyl group at its N-terminus.

The protein resides in the cytoplasm. The enzyme catalyses L-aspartate + H(+) = beta-alanine + CO2. It participates in cofactor biosynthesis; (R)-pantothenate biosynthesis; beta-alanine from L-aspartate: step 1/1. Catalyzes the pyruvoyl-dependent decarboxylation of aspartate to produce beta-alanine. The sequence is that of Aspartate 1-decarboxylase from Chlorobium phaeovibrioides (strain DSM 265 / 1930) (Prosthecochloris vibrioformis (strain DSM 265)).